The following is a 196-amino-acid chain: Molybdenum cofactor guanylyltransferase (196 aa).

GTP-binding positions include 10 to 12 (LAG), Lys23, Asn51, Asp69, and Asp99. Asp99 provides a ligand contact to Mg(2+).

It belongs to the MobA family. In terms of assembly, monomer. Mg(2+) serves as cofactor.

The protein localises to the cytoplasm. The enzyme catalyses Mo-molybdopterin + GTP + H(+) = Mo-molybdopterin guanine dinucleotide + diphosphate. In terms of biological role, transfers a GMP moiety from GTP to Mo-molybdopterin (Mo-MPT) cofactor (Moco or molybdenum cofactor) to form Mo-molybdopterin guanine dinucleotide (Mo-MGD) cofactor. The protein is Molybdenum cofactor guanylyltransferase of Shewanella amazonensis (strain ATCC BAA-1098 / SB2B).